Consider the following 78-residue polypeptide: D-alanyl carrier protein (78 aa).

A Carrier domain is found at 1–78; the sequence is MAFRENVLEI…MIITQLEALK (78 aa). O-(pantetheine 4'-phosphoryl)serine is present on serine 36.

It belongs to the DltC family. 4'-phosphopantetheine is transferred from CoA to a specific serine of apo-DCP.

The protein localises to the cytoplasm. Its pathway is cell wall biogenesis; lipoteichoic acid biosynthesis. Functionally, carrier protein involved in the D-alanylation of lipoteichoic acid (LTA). The loading of thioester-linked D-alanine onto DltC is catalyzed by D-alanine--D-alanyl carrier protein ligase DltA. The DltC-carried D-alanyl group is further transferred to cell membrane phosphatidylglycerol (PG) by forming an ester bond, probably catalyzed by DltD. D-alanylation of LTA plays an important role in modulating the properties of the cell wall in Gram-positive bacteria, influencing the net charge of the cell wall. In Listeria monocytogenes serotype 4b (strain CLIP80459), this protein is D-alanyl carrier protein.